Here is a 678-residue protein sequence, read N- to C-terminus: MTKNLLVELGLEELPAYVVTPSEKQLGEKMAAFLKENRLSFEAIQTFSTPRRLAVRVTGLSDKQSDLTEDFKGPAKKIALDSDGNFTKAAQGFVRGKGLTVEDIEFREIKGEEYVYVTKEEVGQAVEAIVPGVVDVLKSLTFPVSMHWAGNSFEYIRPVHTLTVLLDEQEFDLDFLDIKGSRVSRGHRFLGKETKIQSALSYEEDLRKQFVIADPCEREQMIVDQIKEIEAKHGVRIEIDADLLNEVLNLVEYPTAFMGSFDAKYLEVPEEVLVTSMKEHQRYFVVRDQDGKLLPNFISVRNGNAERLKNVIKGNEKVLVARLEDGEFFWREDQKLVISDLVEKLNNVTFHEKIGSLREHMIRTGQITVLLAEKAGLSVDETVDLARAAAIYKFDLLTGMVGEFDELQGIMGEKYTLLAGETPAVAAAIREHYMPTSAEGELPESKVGAVLAIADKLDTILSFFSVGLIPSGSNDPYALRRATQGVVRILDAFGWHIAMDELIDSLYALKFDSLTYENKAEVMDFIKARVDKMMGSTPKDIKEAVLAGSNFVVADMLEAASALVEVSKEEYFKPSVESLSRAFNLAEKAEGVATVDSALFENDQEKALAEAVETLVLSGPASQQLKQLFALSPVIDAFFENTMVMAEDQAVRQNRLAILSQLTKKAAKFACFNQINTK.

This sequence belongs to the class-II aminoacyl-tRNA synthetase family. As to quaternary structure, tetramer of two alpha and two beta subunits.

It localises to the cytoplasm. It carries out the reaction tRNA(Gly) + glycine + ATP = glycyl-tRNA(Gly) + AMP + diphosphate. The chain is Glycine--tRNA ligase beta subunit from Streptococcus pneumoniae (strain P1031).